A 141-amino-acid polypeptide reads, in one-letter code: Large-conductance mechanosensitive channel (141 aa).

Transmembrane regions (helical) follow at residues 16–36 (VIDL…VDSL) and 83–103 (GAFI…FVAI).

Belongs to the MscL family. In terms of assembly, homopentamer.

The protein localises to the cell inner membrane. In terms of biological role, channel that opens in response to stretch forces in the membrane lipid bilayer. May participate in the regulation of osmotic pressure changes within the cell. In Azoarcus sp. (strain BH72), this protein is Large-conductance mechanosensitive channel.